The following is a 503-amino-acid chain: MRGKIKILDIETGNLAIFINPEDAEQWRIHPNDLVKIESGKRYIYGSAFIGNIVEKGEIGISKDVLSIHQFSNGEIVSLSPAGTPESVKYIKKKMRGEKLKKVEIETIVRDIVDRKLRNTEISAFVSAIEINGLDMEEIAALTIAMAETGDMLDIERKPIMDIHSIGGVPGNKTNVIVVPIVAAAGLTIPKTSSRAITSAAGTADVVEVLTNVTLTLEEIKRIVEKIGACLVWGGALNLAPADDLMIHVERRLSLDPRGLMLASIMAKKYAIGSQYILIDIPTGKGAKVESMEEARSLARDFIELGKRLGQYVEVAITYGGQPIGYTVGPALEAKEALETLMTGRGPGSLVEKAIGLAGLLLEMGGAAPKGKGKIIAREILEKGKAYQKMREIIEEQGGDPDIKPEDIPIGDKTYTIHAQTNGYVTAIDNRGITAIAREAGAPEDKGAGIRLHVKVGDKVKEGDPLFTIHAESESRLDKAIVLARRLEPIKIEGMVLQVIENL.

AMP contacts are provided by residues Gly168, 194–199 (SRAITS), and Thr203. Asp256 functions as the Proton donor in the catalytic mechanism. AMP is bound by residues Ser264 and Lys288.

This sequence belongs to the thymidine/pyrimidine-nucleoside phosphorylase family. Type 2 subfamily.

It carries out the reaction AMP + phosphate = alpha-D-ribose 1,5-bisphosphate + adenine. The enzyme catalyses CMP + phosphate = cytosine + alpha-D-ribose 1,5-bisphosphate. It catalyses the reaction UMP + phosphate = alpha-D-ribose 1,5-bisphosphate + uracil. In terms of biological role, catalyzes the conversion of AMP and phosphate to adenine and ribose 1,5-bisphosphate (R15P). Exhibits phosphorylase activity toward CMP and UMP in addition to AMP. Functions in an archaeal AMP degradation pathway, together with R15P isomerase and RubisCO. This Pyrococcus furiosus (strain ATCC 43587 / DSM 3638 / JCM 8422 / Vc1) protein is AMP phosphorylase.